A 146-amino-acid chain; its full sequence is MVRRGAMVLLTMLILYAAPSFALYGLADFMSFVYVGAIMIVAFGVYIILGRSKKPGFKEMLAVMLISALTAIFLAYFFSGSEVIVPKLKSLGLFAVVAAMLLALARVFRLEAEADFSLRFFLKWILVVAITFTILSVFMLFLRGVV.

5 helical membrane-spanning segments follow: residues 5 to 27 (GAMV…YGLA), 32 to 49 (FVYV…YIIL), 61 to 80 (LAVM…FFSG), 90 to 108 (SLGL…ARVF), and 120 to 142 (FFLK…MLFL).

The protein resides in the cell membrane. This is an uncharacterized protein from Archaeoglobus fulgidus (strain ATCC 49558 / DSM 4304 / JCM 9628 / NBRC 100126 / VC-16).